An 804-amino-acid chain; its full sequence is uncharacterized protein (804 aa).

A run of 10 helical transmembrane segments spans residues 15–35 (LLIVWLALSLAVACVLALGNI), 243–263 (FLLLSALLTLLLAVAAVAVAM), 301–321 (LSAVTGGAIGLLFENVLMVLL), 333–353 (SLWPWLWALGTMTVISLLVGL), 381–401 (FYLPIVSVVVVLLLAGLMGGS), 403–423 (LLWAVLAGAVVLALLCGVLGW), 453–473 (TLSQLSAFSLSFMLLALLLVL), 680–700 (ALEVMVVLVTACGMLLLLAQV), 734–754 (MLGFVSGLVAAIGAETALAVL), and 769–789 (LWIVLPCSGALLLSLFGGWLG).

It belongs to the ABC-4 integral membrane protein family.

The protein resides in the cell membrane. This is an uncharacterized protein from Escherichia coli (strain K12).